Consider the following 525-residue polypeptide: NAD(P)H-quinone oxidoreductase chain 4-2 (525 aa).

14 helical membrane-spanning segments follow: residues 6–26, 36–56, 91–111, 115–135, 137–157, 169–189, 212–232, 243–263, 277–297, 314–334, 335–355, 375–397, 417–437, and 464–484; these read FPWL…IPII, WYAL…FYTS, LIIL…PVTL, LFYF…AVQD, LLFF…LAIW, FILY…TMAF, LLLY…IPLH, TAPA…YALI, FAPV…LTSF, MGFV…GAVL, QMVS…ATYD, IFAM…GFVA, VIVV…LLSM, and VFVI…PKLL.

This sequence belongs to the complex I subunit 4 family.

It localises to the cellular thylakoid membrane. The catalysed reaction is a plastoquinone + NADH + (n+1) H(+)(in) = a plastoquinol + NAD(+) + n H(+)(out). The enzyme catalyses a plastoquinone + NADPH + (n+1) H(+)(in) = a plastoquinol + NADP(+) + n H(+)(out). NDH-1 shuttles electrons from NAD(P)H, via FMN and iron-sulfur (Fe-S) centers, to quinones in the respiratory chain. The immediate electron acceptor for the enzyme in this species is believed to be plastoquinone. Couples the redox reaction to proton translocation (for every two electrons transferred, four hydrogen ions are translocated across the cytoplasmic membrane), and thus conserves the redox energy in a proton gradient. This chain is NAD(P)H-quinone oxidoreductase chain 4-2 (ndhD2), found in Nostoc sp. (strain PCC 7120 / SAG 25.82 / UTEX 2576).